Here is a 182-residue protein sequence, read N- to C-terminus: Oligoribonuclease (182 aa).

One can recognise an Exonuclease domain in the interval 8–171 (LIWIDLEMTG…DDIRESIKEL (164 aa)). Residue tyrosine 129 is part of the active site.

Belongs to the oligoribonuclease family.

It is found in the cytoplasm. 3'-to-5' exoribonuclease specific for small oligoribonucleotides. The polypeptide is Oligoribonuclease (Haemophilus influenzae (strain 86-028NP)).